A 242-amino-acid polypeptide reads, in one-letter code: Sugar fermentation stimulation protein homolog (242 aa).

It belongs to the SfsA family.

The chain is Sugar fermentation stimulation protein homolog from Nitratidesulfovibrio vulgaris (strain DP4) (Desulfovibrio vulgaris).